Here is a 492-residue protein sequence, read N- to C-terminus: MO25-like protein 3 (492 aa).

The disordered stretch occupies residues 442 to 492; sequence SRAGIRFGETRNVKGSPRSRSQSPRPPTGPEPSPRTTSYQNVRFPPEDSSR. Residues 465–474 are compositionally biased toward pro residues; it reads PRPPTGPEPS.

This sequence belongs to the Mo25 family.

This is MO25-like protein 3 from Caenorhabditis briggsae.